Reading from the N-terminus, the 348-residue chain is D-alanine--D-alanine ligase (348 aa).

Positions Lys132–Thr334 constitute an ATP-grasp domain. Residue Leu162–Glu217 coordinates ATP. Mg(2+) is bound by residues Asp288, Glu301, and Asn303.

The protein belongs to the D-alanine--D-alanine ligase family. It depends on Mg(2+) as a cofactor. Requires Mn(2+) as cofactor.

It is found in the cytoplasm. It carries out the reaction 2 D-alanine + ATP = D-alanyl-D-alanine + ADP + phosphate + H(+). Its pathway is cell wall biogenesis; peptidoglycan biosynthesis. Functionally, cell wall formation. This chain is D-alanine--D-alanine ligase, found in Streptococcus pyogenes serotype M6 (strain ATCC BAA-946 / MGAS10394).